Consider the following 755-residue polypeptide: 1,4-alpha-glucan branching enzyme GlgB (755 aa).

Asp-435 acts as the Nucleophile in catalysis. Glu-488 functions as the Proton donor in the catalytic mechanism.

Belongs to the glycosyl hydrolase 13 family. GlgB subfamily. Monomer.

It carries out the reaction Transfers a segment of a (1-&gt;4)-alpha-D-glucan chain to a primary hydroxy group in a similar glucan chain.. The protein operates within glycan biosynthesis; glycogen biosynthesis. Functionally, catalyzes the formation of the alpha-1,6-glucosidic linkages in glycogen by scission of a 1,4-alpha-linked oligosaccharide from growing alpha-1,4-glucan chains and the subsequent attachment of the oligosaccharide to the alpha-1,6 position. This Vibrio parahaemolyticus serotype O3:K6 (strain RIMD 2210633) protein is 1,4-alpha-glucan branching enzyme GlgB.